A 331-amino-acid polypeptide reads, in one-letter code: tRNA-dihydrouridine(20/20a) synthase (331 aa).

FMN-binding positions include 18–20 (PML) and glutamine 70. Cysteine 100 serves as the catalytic Proton donor. FMN-binding positions include lysine 139, histidine 172, 212-214 (NGG), and 234-235 (GR).

Belongs to the Dus family. DusA subfamily. FMN serves as cofactor.

The enzyme catalyses 5,6-dihydrouridine(20) in tRNA + NADP(+) = uridine(20) in tRNA + NADPH + H(+). It carries out the reaction 5,6-dihydrouridine(20) in tRNA + NAD(+) = uridine(20) in tRNA + NADH + H(+). The catalysed reaction is 5,6-dihydrouridine(20a) in tRNA + NADP(+) = uridine(20a) in tRNA + NADPH + H(+). It catalyses the reaction 5,6-dihydrouridine(20a) in tRNA + NAD(+) = uridine(20a) in tRNA + NADH + H(+). In terms of biological role, catalyzes the synthesis of 5,6-dihydrouridine (D), a modified base found in the D-loop of most tRNAs, via the reduction of the C5-C6 double bond in target uridines. Specifically modifies U20 and U20a in tRNAs. This Escherichia coli O6:H1 (strain CFT073 / ATCC 700928 / UPEC) protein is tRNA-dihydrouridine(20/20a) synthase.